Consider the following 81-residue polypeptide: Sulfur carrier protein TusA (81 aa).

Cysteine 19 (cysteine persulfide intermediate) is an active-site residue.

The protein belongs to the sulfur carrier protein TusA family.

It localises to the cytoplasm. Its function is as follows. Sulfur carrier protein which probably makes part of a sulfur-relay system. This chain is Sulfur carrier protein TusA, found in Shewanella frigidimarina (strain NCIMB 400).